Here is a 1202-residue protein sequence, read N- to C-terminus: MDRSEIVARENPVITQRVTNLLQTNAPLLFMPIDIHEVRYGAYTLFMYGSLENGYKAEVRIENIPVFFDVQIESSNTNQLFLKSLLSAENITYERLETLTQRPVMGYREKEKEFAPYIRIFFKSLYERRKAITYLNNMGYNTAADDTTCYYRMVSRELKLPLTSWIQLQHYSYEPHGLVHRFSVTPEDLVSYQDDGPTDHSIVMAYDIETYSPVKGTVPDPNQANDVVFMICMRIFWIHSTEPLASTCITMAPCKKSSEWTTILCSSEKNLLLSFAEQFSRWAPDICTGFNDSRYDWPFIVEKSMQHGILEEIFNKMSLFWHQKLDTILKCYYVKEKRVKISAEKSIISSFLHTPGCLPIDVRNMCMQLYPKAEKTSLKAFLENCGLDSKVDLPYHLMWKYYETRDSEKMADVAYYCIIDAQRCQDLLVRHNVIPDRREVGILSYTSLYDCIYYAGGHKVCNMLIAYAIHDEYGRIACSTIARGKREHGKYPGAFVIDPVKGLEQDKPTTGLDFASLYPSLIMAYNFSPEKFVASREEANSLMAKGESLHYVSFYFNNRLVEGWFVRHNNVPDKMGLYPKVLIDLLNKRTALKQELKKLGEKKECIHESHPGFKELQFRHAMVDAKQKALKIFMNTFYGEAGNNLSPFFLLPLAGGVTSSGQYNLKLVYNFVINKGYGIKYGDTDSLYITCPDSLYTEVTDAYLNSQKTIKHYEQLCHEKVLLSMKAMSTLCAEVNEYLRQDNGTSYLRMAYEEVLFPVCFTGKKKYYGIAHVNTPNFNTKELFIRGIDIIKQGQTKLTKTIGTRIMEESMKLRRPEDHRPPLIEIVKTVLKDAVVNMKQWNFEDFIQTDAWRPDKDNKAVQIFMSRMHARREQLKKHGAAASQFAEPEPGERFSYVIVEKQVQFDIQGHRTDSSRKGDKMEYVSEAKAKNLPIDILFYINNYVLGLCARFINENEEFQPPDNVSNKDEYAQRRAKSYLQKFVQSIHPKDKSVIKQGIVHRQCYKYVHQEIKKKIGIFADLYKEFFNNTTNPIESFIQSTQFMIQYFDGEQKVNHSMKKMIEQHATASNRAGNPAGNPAGNALMRAIFTQLITEEKKIVQALYNKGDAIHDLLTYIINNINYKIATFQTKQMLTFEFSSTHVELLLKLNKTWLILAGIHVAKKHLQALLDSYNNEPPSKTFIQQAIEEECGSIKPSCYDFIS.

A run of 3 repeats spans residues 1071-1074 (AGNP), 1075-1078 (AGNP), and 1079-1082 (AGNA). Residues 1071 to 1082 (AGNPAGNPAGNA) are 3 X 4 AA tandem repeats of A-G-[NK]-[PA].

This sequence belongs to the DNA polymerase type-B family.

It carries out the reaction DNA(n) + a 2'-deoxyribonucleoside 5'-triphosphate = DNA(n+1) + diphosphate. Functionally, DNA-directed DNA polymerase involved in viral DNA replication. This chain is DNA polymerase beta (DPOL), found in Ornithodoros (relapsing fever ticks).